An 802-amino-acid polypeptide reads, in one-letter code: Leucine--tRNA ligase (802 aa).

A 'HIGH' region motif is present at residues 40-51 (PYPSGAGLHVGH). Residues 576-580 (KMSKS) carry the 'KMSKS' region motif. Lys-579 lines the ATP pocket.

This sequence belongs to the class-I aminoacyl-tRNA synthetase family.

It localises to the cytoplasm. It carries out the reaction tRNA(Leu) + L-leucine + ATP = L-leucyl-tRNA(Leu) + AMP + diphosphate. The chain is Leucine--tRNA ligase from Bacillus mycoides (strain KBAB4) (Bacillus weihenstephanensis).